Here is a 252-residue protein sequence, read N- to C-terminus: Vacuolar iron transporter 1 (252 aa).

Over 1–38 the chain is Cytoplasmic; the sequence is MAAATDGGGLPLLADKAASHSHHHHPERHFTSGEVVRD. The chain crosses the membrane as a helical span at residues 39–59; sequence VIMGVSDGLTVPFALAAGLSG. The Vacuolar portion of the chain corresponds to 60 to 65; sequence ASAPSS. The chain crosses the membrane as a helical span at residues 66–86; sequence LVLTAGLAEVAAGAISMGLGG. The Cytoplasmic segment spans residues 87–170; the sequence is YLAAKSEADH…PDPKRAIQSA (84 aa). The interval 92–167 is cytoplasmic metal binding domain (MBD); that stretch reads SEADHYQREM…LEKPDPKRAI (76 aa). Fe cation is bound by residues E104, E107, E115, E118, M151, and E155. The helical transmembrane segment at 171–191 threads the bilayer; it reads LTIALSYVIGGLVPLLPYMFI. The Vacuolar portion of the chain corresponds to 192 to 196; the sequence is STAQN. The helical transmembrane segment at 197-217 threads the bilayer; sequence AMLTSVGVTLVALLFFGYIKG. Residues 218-224 lie on the Cytoplasmic side of the membrane; that stretch reads RFTGNRP. A helical transmembrane segment spans residues 225–245; sequence FLSAVQTAIIGALASAAAYGM. Topologically, residues 246–252 are vacuolar; that stretch reads AKAVQTR.

Belongs to the CCC1 family. Homodimer. The dimeric interaction is mediated by both the transmembrane domains (TMDs) and the cytoplasmic metal binding domain (MBD). In terms of tissue distribution, highly expressed in leaf blades. Expressed in leaf sheaths.

It localises to the vacuole membrane. The catalysed reaction is Fe(2+)(in) = Fe(2+)(out). Vacuolar iron transporter involved in the transfer of iron ions from the cytosol to the vacuole for intracellular iron storage. Vacuolar iron storage is required for seed embryo and seedling development. May be involved in the regulation of iron translocation between flag leaves and seeds. Can transport zinc ions from the cytosol to the vacuole. The chain is Vacuolar iron transporter 1 from Oryza sativa subsp. japonica (Rice).